Reading from the N-terminus, the 485-residue chain is MFQYEELNKQFIGGKWQEGSSPNVLENKNPYTQKTFTTFRKATADDVDEAYRAAALAKKKWDAVNPFEKRTILEKAVTYIEENEEAIIYLIMEELGGTRLKAAFEIGLVKNIIKEAATFPIRMEGKILPSTIDGKENRLYRVPAGVVGVISPFNFPFFLSMKSVAPALGAGNGVVLKPHEETPICGGTLIAKIFENAGIPAGLLNVVVTDIAEIGDSFVEHPVPRIISFTGSTKVGSYIGQLAMKHFKKPLLELGGNSAFIVLEDADIEYAVNAAVFSRFTHQGQICMSANRVLVHSSIYDKFLELYQAKVESLKVGDPMDPDTIIGPLINSRQTDGLMKTVEQAIEEGAVPVKLGGFNGTIVEPTILKDVKPFMSIAKEELFGPVVSFMKFDSEDEAVDIANETPFGLSGAVHTSNLERGVAFAKRIETGMIHVNDTTINDEPNVAFGGEKQSGLGRLNGEWSLEEFTTLKWISVQHEKRSFPY.

231–236 (GSTKVG) contacts NAD(+). Residues Glu-253 and Cys-287 contribute to the active site.

It belongs to the aldehyde dehydrogenase family.

The catalysed reaction is benzaldehyde + NAD(+) + H2O = benzoate + NADH + 2 H(+). The enzyme catalyses vanillin + NAD(+) + H2O = vanillate + NADH + 2 H(+). A benzaldehyde dehydrogenase able to act on substrates with 3- and 4-hydroxy and methoxy substitutions; converts vanillin (4-hydroxy-3-methoxybenzaldehyde) to vanillic acid in vitro. The physiological substrate is unknown. The sequence is that of Benzaldehyde dehydrogenase YfmT (yfmT) from Bacillus subtilis (strain 168).